Reading from the N-terminus, the 216-residue chain is Peptide methionine sulfoxide reductase MsrA (216 aa).

The active site involves cysteine 54.

The protein belongs to the MsrA Met sulfoxide reductase family.

The enzyme catalyses L-methionyl-[protein] + [thioredoxin]-disulfide + H2O = L-methionyl-(S)-S-oxide-[protein] + [thioredoxin]-dithiol. The catalysed reaction is [thioredoxin]-disulfide + L-methionine + H2O = L-methionine (S)-S-oxide + [thioredoxin]-dithiol. Has an important function as a repair enzyme for proteins that have been inactivated by oxidation. Catalyzes the reversible oxidation-reduction of methionine sulfoxide in proteins to methionine. This Xanthomonas euvesicatoria pv. vesicatoria (strain 85-10) (Xanthomonas campestris pv. vesicatoria) protein is Peptide methionine sulfoxide reductase MsrA.